A 133-amino-acid polypeptide reads, in one-letter code: Complexin-1 (133 aa).

Disordered regions lie at residues 1-40 (MDFV…RLEA) and 85-112 (AMEA…DEEE). Over residues 15–40 (DMGKMLGGDEEKDPDAEKKEEERLEA) the composition is skewed to basic and acidic residues. A coiled-coil region spans residues 28 to 60 (PDAEKKEEERLEALRQAEEERAGKYAKMEAERE).

The protein belongs to the complexin/synaphin family. In terms of assembly, binds to the SNARE core complex containing SNAP25, VAMP2 and syntaxin-1. As to expression, nervous system. Present in electric organ (at protein level).

The protein localises to the cytoplasm. The protein resides in the cytosol. Its function is as follows. Positively regulates a late step in synaptic vesicle exocytosis. The sequence is that of Complexin-1 from Narke japonica (Japanese sleeper ray).